A 318-amino-acid chain; its full sequence is MEGRVNALSNINDLELHNFLVDPNFDQFINLIRGDHQTIDENPVLDFDLGPLQNSPCFIDENQFIPTPVDDLFDELPDLDSNVAESFRSFDGDSVRAGGEEDEEDYNDGDDSSATTTNNDGTRKTKTDRSRTLISERRRRGRMKDKLYALRSLVPNITKMDKASIVGDAVLYVQELQSQAKKLKSDIAGLEASLNSTGGYQEHAPDAQKTQPFRGINPPASKKIIQMDVIQVEEKGFYVRLVCNKGEGVAPSLYKSLESLTSFQVQNSNLSSPSPDTYLLTYTLDGTCFEQSLNLPNLKLWITGSLLNQGFEFIKSFT.

Residues F90 to R138 are disordered. A compositionally biased stretch (acidic residues) spans E100–D111. Positions G121–E136 are enriched in basic and acidic residues. Positions T127–L176 constitute a bHLH domain.

As to quaternary structure, homodimer. As to expression, expressed in roots and inflorescence, and to a lower extent, in leaves and stems. In roots, confined to the outer cell layers, specifically in the differentiation zone. Also detected in the endodermis and inner tissues of the central cylinder.

It is found in the nucleus. Transcription factor. Essential protein involved in iron uptake responses. Regulates FRO2 at the level of mRNA accumulation and IRT1 at the level of protein accumulation. Confers enhanced iron mobilization responses at low iron supply. The protein is Transcription factor FER-LIKE IRON DEFICIENCY-INDUCED TRANSCRIPTION FACTOR (FIT) of Arabidopsis thaliana (Mouse-ear cress).